Here is a 243-residue protein sequence, read N- to C-terminus: MAISHRGFTITRVPMLADNYAWLVAHGGASAFVDPADAAAAIEAVEAAGGRLDWVLLTHHHDDHIAGAVDLAARFGARIAGNAADAARLPRLDAALAPGQTIDLGGEAVRMIATPGHTVGHVTYLFGDAAAACGDTLFSLGCGRMFEGTPAQFHASLQALAALDPETLMLCGHEYTLSNARFARHVDPDNAALAARAAEAERLRAAGAPTLPVRLADELAANPFLRAASAEEFARLRAAKDKF.

Residues H59, H61, D63, H64, H117, D135, and H173 each coordinate Zn(2+).

It belongs to the metallo-beta-lactamase superfamily. Glyoxalase II family. Monomer. Requires Zn(2+) as cofactor.

The catalysed reaction is an S-(2-hydroxyacyl)glutathione + H2O = a 2-hydroxy carboxylate + glutathione + H(+). It functions in the pathway secondary metabolite metabolism; methylglyoxal degradation; (R)-lactate from methylglyoxal: step 2/2. Thiolesterase that catalyzes the hydrolysis of S-D-lactoyl-glutathione to form glutathione and D-lactic acid. The polypeptide is Hydroxyacylglutathione hydrolase (Acidiphilium cryptum (strain JF-5)).